A 433-amino-acid polypeptide reads, in one-letter code: Glutamate-1-semialdehyde 2,1-aminomutase (433 aa).

K271 bears the N6-(pyridoxal phosphate)lysine mark.

This sequence belongs to the class-III pyridoxal-phosphate-dependent aminotransferase family. HemL subfamily. Homodimer. Pyridoxal 5'-phosphate serves as cofactor.

It localises to the cytoplasm. It catalyses the reaction (S)-4-amino-5-oxopentanoate = 5-aminolevulinate. Its pathway is porphyrin-containing compound metabolism; protoporphyrin-IX biosynthesis; 5-aminolevulinate from L-glutamyl-tRNA(Glu): step 2/2. The protein operates within porphyrin-containing compound metabolism; chlorophyll biosynthesis. The chain is Glutamate-1-semialdehyde 2,1-aminomutase from Prochlorococcus marinus (strain MIT 9301).